A 327-amino-acid polypeptide reads, in one-letter code: MKFEDFKIMATASSAPDHVVTNDELATMMDTSDEWITQRTGIKRRRIATEETTSSMCTDVATQLIAQSDLTAKDIDLIAVATMSPDYLTPSVSAMVQGNIGADHAIAFDIDAACSGFVYGLHLVKQMLIANQQKNAILIGGETLSKLLDWSDRSTAVLFGDGAGGVLIRNTAVDKGSFISEDLRTLGNLGQYLTAGQTGNPSPFATDQQPFSPFFKMSGRRVYSFAVKNVPESINDALKQANLTADEVDCFVLHQANRRIVERIADELAVSMAKFPINIDEYGNTAAASEPILLDQLVKQKIIKRGDVIALSGFGGGLTVGTMIMKY.

Catalysis depends on residues Cys-114 and His-254. Residues Gln-255–Arg-259 form an ACP-binding region. The active site involves Asn-284.

It belongs to the thiolase-like superfamily. FabH family. As to quaternary structure, homodimer.

It localises to the cytoplasm. It catalyses the reaction malonyl-[ACP] + acetyl-CoA + H(+) = 3-oxobutanoyl-[ACP] + CO2 + CoA. The protein operates within lipid metabolism; fatty acid biosynthesis. In terms of biological role, catalyzes the condensation reaction of fatty acid synthesis by the addition to an acyl acceptor of two carbons from malonyl-ACP. Catalyzes the first condensation reaction which initiates fatty acid synthesis and may therefore play a role in governing the total rate of fatty acid production. Possesses both acetoacetyl-ACP synthase and acetyl transacylase activities. Its substrate specificity determines the biosynthesis of branched-chain and/or straight-chain of fatty acids. The chain is Beta-ketoacyl-[acyl-carrier-protein] synthase III from Lactobacillus helveticus (strain DPC 4571).